Here is a 423-residue protein sequence, read N- to C-terminus: AP-1 complex subunit mu-2 (423 aa).

One can recognise an MHD domain in the interval 168-421 (KNEVFIDVIE…ITQSGDYQLR (254 aa)).

It belongs to the adaptor complexes medium subunit family. In terms of assembly, adaptor protein complex 1 (AP-1) is a heterotetramer composed of two large adaptins (gamma-type subunit AP1G1 and beta-type subunit AP1B1), a medium adaptin (mu-type subunit AP1M1 or AP1M2) and a small adaptin (sigma-type subunit AP1S1 or AP1S2 or AP1S3). Interacts with P2X4. Phosphorylation of membrane-bound AP1M1/AP1M2 increases its affinity for sorting signals.

The protein resides in the golgi apparatus. It localises to the cytoplasmic vesicle. It is found in the clathrin-coated vesicle membrane. Subunit of clathrin-associated adaptor protein complex 1 that plays a role in protein sorting in the trans-Golgi network (TGN) and endosomes. The AP complexes mediate the recruitment of clathrin to membranes and the recognition of sorting signals within the cytosolic tails of transmembrane cargo molecules. The sequence is that of AP-1 complex subunit mu-2 (Ap1m2) from Mus musculus (Mouse).